A 534-amino-acid chain; its full sequence is Zinc finger protein 703-A (534 aa).

3 disordered regions span residues 1-35 (MNCSPPGSSTDTERQSSSSGTPATPCPTLAPTHPV), 90-251 (SQIG…VAPV), and 300-320 (QLPGTLGLPGKPPSSSPLTGA). Composition is skewed to low complexity over residues 15–34 (QSSSSGTPATPCPTLAPTHP), 115–124 (RSSSLKLGES), and 146–155 (GSSAGGSADK). Over residues 173–182 (SPSSRVSSPG) the composition is skewed to polar residues. A compositionally biased stretch (basic and acidic residues) spans 185 to 200 (CDSKNNESQEKKEPEA). Positions 204 to 217 (SLETSQANPTLTRA) are enriched in polar residues. The segment covering 218 to 229 (SISNSSAESSQS) has biased composition (low complexity). The span at 230-239 (GDVTPSSKSD) shows a compositional bias: polar residues. The C2H2-type zinc-finger motif lies at 406-434 (HICNWVSASGPCDKRFATSEELLAHLRTH).

Belongs to the Elbow/Noc family.

The protein localises to the nucleus. The protein resides in the cytoplasm. Transcriptional corepressor which does not bind directly to DNA and may regulate transcription through recruitment of histone deacetylases to gene promoters. Regulates cell adhesion, migration and proliferation. Involved in specification of the lateral neural plate border (NPB). May be required for segmental gene expression during hindbrain development. The polypeptide is Zinc finger protein 703-A (znf703-a) (Xenopus laevis (African clawed frog)).